Here is a 362-residue protein sequence, read N- to C-terminus: P2Y purinoceptor 1 (362 aa).

The Extracellular segment spans residues 1–40; that stretch reads MTEALISAALNGTQPELLAGGWAAGNASTKCSLTKTGFQF. N-linked (GlcNAc...) asparagine glycans are attached at residues Asn11 and Asn26. Disulfide bonds link Cys31/Cys285 and Cys113/Cys191. Lys35 lines the ADP pocket. Residues 41-63 traverse the membrane as a helical segment; that stretch reads YYLPTVYILVFITGFLGNSVAIW. At 64 to 76 the chain is on the cytoplasmic side; it reads MFVFHMRPWSGIS. The chain crosses the membrane as a helical span at residues 77–98; sequence VYMFNLALADFLYVLTLPALIF. Residues 99-114 are Extracellular-facing; the sequence is YYFNKTDWIFGDVMCK. Asn102 carries an N-linked (GlcNAc...) asparagine glycan. Residues 115–136 form a helical membrane-spanning segment; the sequence is LQRFIFHVNLYGSILFLTCISV. The Cytoplasmic portion of the chain corresponds to 137 to 155; that stretch reads HRYTGVVHPLKSLGRLKKK. A helical membrane pass occupies residues 156–177; it reads NAVYVSSLVWALVVAVIAPILF. At 178–203 the chain is on the extracellular side; that stretch reads YSGTGVRRNKTITCYDTTADEYLRSY. N-linked (GlcNAc...) asparagine glycosylation occurs at Asn186. 192–194 provides a ligand contact to ADP; the sequence is YDT. Residues 204–226 form a helical membrane-spanning segment; that stretch reads FVYSMCTTVFMFCIPFIVILGCY. At 227-249 the chain is on the cytoplasmic side; sequence GLIVKALIYKDLDNSPLRRKSIY. A helical membrane pass occupies residues 250 to 273; that stretch reads LVIIVLTVFAVSYLPFHVMKTLNL. ADP is bound by residues 272-276, 292-295, and Arg299; these read NLRAR and YATY. At 274–292 the chain is on the extracellular side; it reads RARLDFQTPQMCAFNDKVY. The chain crosses the membrane as a helical span at residues 293-314; sequence ATYQVTRGLASLNSCVDPILYF. Over 315 to 362 the chain is Cytoplasmic; that stretch reads LAGDTFRRRLSRATRKSSRRSEPNVQSKSEEMTLNILTEYKQNGDTSL.

The protein belongs to the G-protein coupled receptor 1 family. In terms of tissue distribution, mainly found in blood, brain, and lung. To a lesser extent in stomach, gut and skeletal muscle.

It localises to the cell membrane. Receptor for extracellular adenine nucleotides such as ADP. In platelets, binding to ADP leads to mobilization of intracellular calcium ions via activation of phospholipase C, a change in platelet shape, and ultimately platelet aggregation. The sequence is that of P2Y purinoceptor 1 (P2RY1) from Meleagris gallopavo (Wild turkey).